Consider the following 550-residue polypeptide: Zinc finger protein squeeze (550 aa).

Over residues 73-105 (QQQQQQQQQEMLQQQQQHQAHQEQQQQQQQQQQ) the composition is skewed to low complexity. The disordered stretch occupies residues 73–179 (QQQQQQQQQE…GGGGGDGDQS (107 aa)). The span at 106–117 (QHHHQQQQHHLK) shows a compositional bias: basic residues. A compositionally biased stretch (polar residues) spans 141–156 (RSPQRPLMSSGSNASS). Gly residues predominate over residues 164-176 (SGGGPGGGGGGDG). C2H2-type zinc fingers lie at residues 182-204 (YKCA…TRIH), 210-232 (YRCE…IRTH), 238-262 (YKCR…SRCH), 268-290 (FKCN…IPKH), and 299-321 (HICN…LQKH). Residues 399 to 485 (LQQHQQQQQQ…VPPSHLQQHR (87 aa)) are disordered. The segment covering 400–416 (QQHQQQQQQQQQDMLQQ) has biased composition (low complexity). T424 is subject to Phosphothreonine. Phosphoserine is present on residues S428 and S430. The span at 444–460 (QTTPQHHLQQQQQQQQP) shows a compositional bias: low complexity. Phosphotyrosine is present on residues Y494 and Y496.

Belongs to the krueppel C2H2-type zinc-finger protein family. In terms of assembly, interacts with nab; which acts as a coactivator. Interacts with ap.

The protein localises to the nucleus. Its function is as follows. Transcription factor involved in neuronal fate specification. First required in embryonic CNS development to define the number of cells that express apterous (ap) in the ap thoracic cluster of interneurons. Later on, it plays a central role in the combinatorial code of transcription factors that specifies the fate of the Tv neuron in the ap cluster by participating in the transcription regulation of FMRFa in Tv cells. Also required for projection neuron dendritic targeting. This Drosophila pseudoobscura pseudoobscura (Fruit fly) protein is Zinc finger protein squeeze (sqz).